We begin with the raw amino-acid sequence, 962 residues long: Glycine dehydrogenase (decarboxylating) (962 aa).

Lys-709 bears the N6-(pyridoxal phosphate)lysine mark.

Belongs to the GcvP family. In terms of assembly, the glycine cleavage system is composed of four proteins: P, T, L and H. Pyridoxal 5'-phosphate is required as a cofactor.

The enzyme catalyses N(6)-[(R)-lipoyl]-L-lysyl-[glycine-cleavage complex H protein] + glycine + H(+) = N(6)-[(R)-S(8)-aminomethyldihydrolipoyl]-L-lysyl-[glycine-cleavage complex H protein] + CO2. Functionally, the glycine cleavage system catalyzes the degradation of glycine. The P protein binds the alpha-amino group of glycine through its pyridoxal phosphate cofactor; CO(2) is released and the remaining methylamine moiety is then transferred to the lipoamide cofactor of the H protein. The protein is Glycine dehydrogenase (decarboxylating) of Shewanella sp. (strain MR-4).